A 550-amino-acid chain; its full sequence is Glucose-6-phosphate isomerase (550 aa).

D-glucose 6-phosphate-binding positions include glycine 163–serine 164, serine 214–threonine 219, glutamine 358, glutamate 362, histidine 393, and lysine 515. Residue glutamate 362 is the Proton donor of the active site. Residues histidine 393 and lysine 515 contribute to the active site.

Belongs to the GPI family. In terms of assembly, homodimer.

The protein resides in the cytoplasm. It carries out the reaction alpha-D-glucose 6-phosphate = beta-D-fructose 6-phosphate. It functions in the pathway carbohydrate degradation; glycolysis; D-glyceraldehyde 3-phosphate and glycerone phosphate from D-glucose: step 2/4. Its function is as follows. In the cytoplasm, catalyzes the conversion of glucose-6-phosphate to fructose-6-phosphate, the second step in glycolysis, and the reverse reaction during gluconeogenesis. This chain is Glucose-6-phosphate isomerase (PGI1), found in Candida albicans (strain SC5314 / ATCC MYA-2876) (Yeast).